The following is a 220-amino-acid chain: Charged multivesicular body protein 2a (220 aa).

Coiled coils occupy residues 12 to 53 and 198 to 219; these read EELL…MAKQ and EATAALADADADLEERLNNLRR. The interval 196 to 220 is disordered; that stretch reads KGEATAALADADADLEERLNNLRRD. The MIT-interacting motif signature appears at 208–218; it reads ADLEERLNNLR. The span at 211–220 shows a compositional bias: basic and acidic residues; the sequence is EERLNNLRRD.

This sequence belongs to the SNF7 family. In terms of assembly, probable core component of the endosomal sorting required for transport complex III (ESCRT-III). ESCRT-III components are thought to multimerize to form a flat lattice on the perimeter membrane of the endosome.

The protein localises to the late endosome membrane. The protein resides in the cytoplasm. In terms of biological role, probable core component of the endosomal sorting required for transport complex III (ESCRT-III) which is involved in multivesicular bodies (MVBs) formation and sorting of endosomal cargo proteins into MVBs. MVBs contain intraluminal vesicles (ILVs) that are generated by invagination and scission from the limiting membrane of the endosome and mostly are delivered to lysosomes enabling degradation of membrane proteins, such as stimulated growth factor receptors, lysosomal enzymes and lipids. This chain is Charged multivesicular body protein 2a (chmp2a), found in Xenopus laevis (African clawed frog).